The chain runs to 104 residues: Large ribosomal subunit protein uL24 (104 aa).

This sequence belongs to the universal ribosomal protein uL24 family. As to quaternary structure, part of the 50S ribosomal subunit.

One of two assembly initiator proteins, it binds directly to the 5'-end of the 23S rRNA, where it nucleates assembly of the 50S subunit. In terms of biological role, one of the proteins that surrounds the polypeptide exit tunnel on the outside of the subunit. The sequence is that of Large ribosomal subunit protein uL24 from Erwinia tasmaniensis (strain DSM 17950 / CFBP 7177 / CIP 109463 / NCPPB 4357 / Et1/99).